Here is a 229-residue protein sequence, read N- to C-terminus: Cytochrome c oxidase subunit 2 (229 aa).

Residues 1 to 26 (MSTWANLGLQDSASPLMEQLIFFHDH) are Mitochondrial intermembrane-facing. Residues 27–48 (ALLILVMITVLVGYLMFMLFFN) traverse the membrane as a helical segment. Topologically, residues 49–62 (SYVNRFLLHGQLIE) are mitochondrial matrix. Residues 63–82 (MIWTILPAIILLFIAMPSLR) traverse the membrane as a helical segment. Over 83–229 (LLYLLDEINE…IKWISNSVNS (147 aa)) the chain is Mitochondrial intermembrane. Cu cation is bound by residues histidine 161, cysteine 196, glutamate 198, cysteine 200, histidine 204, and methionine 207. Glutamate 198 contributes to the Mg(2+) binding site.

Belongs to the cytochrome c oxidase subunit 2 family. As to quaternary structure, component of the cytochrome c oxidase (complex IV, CIV), a multisubunit enzyme composed of a catalytic core of 3 subunits and several supernumerary subunits. The complex exists as a monomer or a dimer and forms supercomplexes (SCs) in the inner mitochondrial membrane with ubiquinol-cytochrome c oxidoreductase (cytochrome b-c1 complex, complex III, CIII). Requires Cu cation as cofactor.

Its subcellular location is the mitochondrion inner membrane. The enzyme catalyses 4 Fe(II)-[cytochrome c] + O2 + 8 H(+)(in) = 4 Fe(III)-[cytochrome c] + 2 H2O + 4 H(+)(out). Component of the cytochrome c oxidase, the last enzyme in the mitochondrial electron transport chain which drives oxidative phosphorylation. The respiratory chain contains 3 multisubunit complexes succinate dehydrogenase (complex II, CII), ubiquinol-cytochrome c oxidoreductase (cytochrome b-c1 complex, complex III, CIII) and cytochrome c oxidase (complex IV, CIV), that cooperate to transfer electrons derived from NADH and succinate to molecular oxygen, creating an electrochemical gradient over the inner membrane that drives transmembrane transport and the ATP synthase. Cytochrome c oxidase is the component of the respiratory chain that catalyzes the reduction of oxygen to water. Electrons originating from reduced cytochrome c in the intermembrane space (IMS) are transferred via the dinuclear copper A center (CU(A)) of subunit 2 and heme A of subunit 1 to the active site in subunit 1, a binuclear center (BNC) formed by heme A3 and copper B (CU(B)). The BNC reduces molecular oxygen to 2 water molecules using 4 electrons from cytochrome c in the IMS and 4 protons from the mitochondrial matrix. The chain is Cytochrome c oxidase subunit 2 (mt:CoII) from Drosophila affinis (Fruit fly).